Here is a 502-residue protein sequence, read N- to C-terminus: ATP synthase subunit alpha (502 aa).

G169–T176 contacts ATP.

This sequence belongs to the ATPase alpha/beta chains family. As to quaternary structure, F-type ATPases have 2 components, CF(1) - the catalytic core - and CF(0) - the membrane proton channel. CF(1) has five subunits: alpha(3), beta(3), gamma(1), delta(1), epsilon(1). CF(0) has three main subunits: a(1), b(2) and c(9-12). The alpha and beta chains form an alternating ring which encloses part of the gamma chain. CF(1) is attached to CF(0) by a central stalk formed by the gamma and epsilon chains, while a peripheral stalk is formed by the delta and b chains.

It is found in the cell inner membrane. The enzyme catalyses ATP + H2O + 4 H(+)(in) = ADP + phosphate + 5 H(+)(out). Produces ATP from ADP in the presence of a proton gradient across the membrane. The alpha chain is a regulatory subunit. This chain is ATP synthase subunit alpha, found in Trichlorobacter lovleyi (strain ATCC BAA-1151 / DSM 17278 / SZ) (Geobacter lovleyi).